Reading from the N-terminus, the 121-residue chain is Small ribosomal subunit protein uS11 (121 aa).

This sequence belongs to the universal ribosomal protein uS11 family. In terms of assembly, part of the 30S ribosomal subunit. Interacts with proteins S7 and S18. Binds to IF-3.

Its function is as follows. Located on the platform of the 30S subunit, it bridges several disparate RNA helices of the 16S rRNA. Forms part of the Shine-Dalgarno cleft in the 70S ribosome. The polypeptide is Small ribosomal subunit protein uS11 (Mycoplasma pneumoniae (strain ATCC 29342 / M129 / Subtype 1) (Mycoplasmoides pneumoniae)).